A 687-amino-acid chain; its full sequence is Hemin receptor (687 aa).

Residues 1–28 form the signal peptide; that stretch reads MPRSTSDRFRWSPLSLAIACTLSLAVQA. The TonB box motif lies at 44 to 51; the sequence is DTMVVTAT. Residues 56 to 167 form the TBDR plug domain; the sequence is SSFEAPMMVT…LGGVISYETV (112 aa). Residues 178 to 687 enclose the TBDR beta-barrel domain; that stretch reads NSGYRVYSAA…NAKFFVSYQW (510 aa). The interval 319-338 is disordered; sequence ARPQGTPEEGRKQTTKGGKL. The span at 326–338 shows a compositional bias: basic and acidic residues; the sequence is EEGRKQTTKGGKL. Positions 670–687 match the TonB C-terminal box motif; the sequence is QGVPQDGRNAKFFVSYQW.

Belongs to the TonB-dependent receptor family.

The protein localises to the cell outer membrane. Its function is as follows. This protein is involved in the initial step of iron uptake by binding hemin, an iron chelatin siderophore that allows the bacteria to extract iron from the environment. This is Hemin receptor (hemR) from Yersinia enterocolitica.